The following is a 640-amino-acid chain: Arogenate dehydrogenase 1, chloroplastic (640 aa).

The transit peptide at 1-18 directs the protein to the chloroplast; it reads MAETLITKPPLSLSFTSL. 2 consecutive Prephenate/arogenate dehydrogenase domains span residues 53–334 and 365–640; these read LRIA…GEND and LKIG…LLTS.

This sequence belongs to the prephenate/arogenate dehydrogenase family. In terms of tissue distribution, expressed in roots, stems, leaves, flowers, siliques and seeds. More abundant in seeds.

The protein localises to the plastid. Its subcellular location is the chloroplast. It catalyses the reaction L-arogenate + NADP(+) = L-tyrosine + CO2 + NADPH. Its pathway is amino-acid biosynthesis; L-tyrosine biosynthesis; L-tyrosine from L-arogenate (NADP(+) route): step 1/1. In terms of biological role, involved in the biosynthesis of tyrosine. Has no prephenate dehydrogenase activity. The polypeptide is Arogenate dehydrogenase 1, chloroplastic (TYRAAT1) (Arabidopsis thaliana (Mouse-ear cress)).